The chain runs to 278 residues: Bis(5'-nucleosyl)-tetraphosphatase, symmetrical (278 aa).

It belongs to the Ap4A hydrolase family.

It carries out the reaction P(1),P(4)-bis(5'-adenosyl) tetraphosphate + H2O = 2 ADP + 2 H(+). Hydrolyzes diadenosine 5',5'''-P1,P4-tetraphosphate to yield ADP. The protein is Bis(5'-nucleosyl)-tetraphosphatase, symmetrical of Nitrosococcus oceani (strain ATCC 19707 / BCRC 17464 / JCM 30415 / NCIMB 11848 / C-107).